We begin with the raw amino-acid sequence, 138 residues long: Ribulose bisphosphate carboxylase small subunit (138 aa).

It belongs to the RuBisCO small chain family. As to quaternary structure, heterohexadecamer of 8 large and 8 small subunits.

The protein localises to the plastid. It is found in the chloroplast. RuBisCO catalyzes two reactions: the carboxylation of D-ribulose 1,5-bisphosphate, the primary event in carbon dioxide fixation, as well as the oxidative fragmentation of the pentose substrate in the photorespiration process. Both reactions occur simultaneously and in competition at the same active site. Although the small subunit is not catalytic it is essential for maximal activity. The sequence is that of Ribulose bisphosphate carboxylase small subunit from Pyropia katadae (Red alga).